A 149-amino-acid chain; its full sequence is 3-dehydroquinate dehydratase (149 aa).

Catalysis depends on tyrosine 26, which acts as the Proton acceptor. Substrate contacts are provided by asparagine 77, histidine 83, and aspartate 90. The active-site Proton donor is the histidine 103. Substrate contacts are provided by residues 104–105 and arginine 114; that span reads LS.

It belongs to the type-II 3-dehydroquinase family. As to quaternary structure, homododecamer.

The catalysed reaction is 3-dehydroquinate = 3-dehydroshikimate + H2O. The protein operates within metabolic intermediate biosynthesis; chorismate biosynthesis; chorismate from D-erythrose 4-phosphate and phosphoenolpyruvate: step 3/7. Catalyzes a trans-dehydration via an enolate intermediate. The polypeptide is 3-dehydroquinate dehydratase (Haemophilus influenzae (strain PittGG)).